Reading from the N-terminus, the 169-residue chain is Crossover junction endodeoxyribonuclease RuvC (169 aa).

Residues D15, E75, and D147 contribute to the active site. 3 residues coordinate Mg(2+): D15, E75, and D147.

The protein belongs to the RuvC family. As to quaternary structure, homodimer which binds Holliday junction (HJ) DNA. The HJ becomes 2-fold symmetrical on binding to RuvC with unstacked arms; it has a different conformation from HJ DNA in complex with RuvA. In the full resolvosome a probable DNA-RuvA(4)-RuvB(12)-RuvC(2) complex forms which resolves the HJ. Requires Mg(2+) as cofactor.

It localises to the cytoplasm. It carries out the reaction Endonucleolytic cleavage at a junction such as a reciprocal single-stranded crossover between two homologous DNA duplexes (Holliday junction).. Its function is as follows. The RuvA-RuvB-RuvC complex processes Holliday junction (HJ) DNA during genetic recombination and DNA repair. Endonuclease that resolves HJ intermediates. Cleaves cruciform DNA by making single-stranded nicks across the HJ at symmetrical positions within the homologous arms, yielding a 5'-phosphate and a 3'-hydroxyl group; requires a central core of homology in the junction. The consensus cleavage sequence is 5'-(A/T)TT(C/G)-3'. Cleavage occurs on the 3'-side of the TT dinucleotide at the point of strand exchange. HJ branch migration catalyzed by RuvA-RuvB allows RuvC to scan DNA until it finds its consensus sequence, where it cleaves and resolves the cruciform DNA. This is Crossover junction endodeoxyribonuclease RuvC from Caulobacter sp. (strain K31).